A 241-amino-acid chain; its full sequence is NH(3)-dependent NAD(+) synthetase (241 aa).

29-36 (GISGGIDS) is a binding site for ATP. Residue Asp35 coordinates Mg(2+). Arg110 provides a ligand contact to deamido-NAD(+). Residue Glu135 participates in Mg(2+) binding. Residues Lys143 and Asp150 each coordinate deamido-NAD(+). 2 residues coordinate ATP: Lys159 and Ser181. 226-227 (HK) serves as a coordination point for deamido-NAD(+).

Belongs to the NAD synthetase family. Homodimer.

The catalysed reaction is deamido-NAD(+) + NH4(+) + ATP = AMP + diphosphate + NAD(+) + H(+). It functions in the pathway cofactor biosynthesis; NAD(+) biosynthesis; NAD(+) from deamido-NAD(+) (ammonia route): step 1/1. In terms of biological role, catalyzes the ATP-dependent amidation of deamido-NAD to form NAD. Uses ammonia as a nitrogen source. This chain is NH(3)-dependent NAD(+) synthetase, found in Finegoldia magna (strain ATCC 29328 / DSM 20472 / WAL 2508) (Peptostreptococcus magnus).